The chain runs to 274 residues: Acyl-[acyl-carrier-protein]--UDP-N-acetylglucosamine O-acyltransferase (274 aa).

It belongs to the transferase hexapeptide repeat family. LpxA subfamily. As to quaternary structure, homotrimer.

It is found in the cytoplasm. It carries out the reaction a (3R)-hydroxyacyl-[ACP] + UDP-N-acetyl-alpha-D-glucosamine = a UDP-3-O-[(3R)-3-hydroxyacyl]-N-acetyl-alpha-D-glucosamine + holo-[ACP]. Its pathway is glycolipid biosynthesis; lipid IV(A) biosynthesis; lipid IV(A) from (3R)-3-hydroxytetradecanoyl-[acyl-carrier-protein] and UDP-N-acetyl-alpha-D-glucosamine: step 1/6. In terms of biological role, involved in the biosynthesis of lipid A, a phosphorylated glycolipid that anchors the lipopolysaccharide to the outer membrane of the cell. This Bartonella bacilliformis (strain ATCC 35685 / KC583 / Herrer 020/F12,63) protein is Acyl-[acyl-carrier-protein]--UDP-N-acetylglucosamine O-acyltransferase.